The following is a 187-amino-acid chain: Elongation factor P (187 aa).

The protein belongs to the elongation factor P family.

It localises to the cytoplasm. It functions in the pathway protein biosynthesis; polypeptide chain elongation. Functionally, involved in peptide bond synthesis. Stimulates efficient translation and peptide-bond synthesis on native or reconstituted 70S ribosomes in vitro. Probably functions indirectly by altering the affinity of the ribosome for aminoacyl-tRNA, thus increasing their reactivity as acceptors for peptidyl transferase. The polypeptide is Elongation factor P (Jannaschia sp. (strain CCS1)).